The sequence spans 603 residues: Aspartate--tRNA(Asp/Asn) ligase (603 aa).

Residue glutamate 182 participates in L-aspartate binding. The aspartate stretch occupies residues 206 to 209 (QLFK). An L-aspartate-binding site is contributed by arginine 228. Residues 228–230 (RDE) and glutamine 237 each bind ATP. Histidine 454 lines the L-aspartate pocket. Glutamate 500 is an ATP binding site. Arginine 507 provides a ligand contact to L-aspartate. 552–555 (GLDR) is an ATP binding site.

It belongs to the class-II aminoacyl-tRNA synthetase family. Type 1 subfamily. As to quaternary structure, homodimer.

The protein resides in the cytoplasm. It catalyses the reaction tRNA(Asx) + L-aspartate + ATP = L-aspartyl-tRNA(Asx) + AMP + diphosphate. In terms of biological role, aspartyl-tRNA synthetase with relaxed tRNA specificity since it is able to aspartylate not only its cognate tRNA(Asp) but also tRNA(Asn). Reaction proceeds in two steps: L-aspartate is first activated by ATP to form Asp-AMP and then transferred to the acceptor end of tRNA(Asp/Asn). The chain is Aspartate--tRNA(Asp/Asn) ligase from Aquifex aeolicus (strain VF5).